A 541-amino-acid polypeptide reads, in one-letter code: Chaperonin GroEL (541 aa).

ATP-binding positions include 29-32, 86-90, G413, 477-479, and D493; these read TLGP, DGTTT, and DAL.

The protein belongs to the chaperonin (HSP60) family. In terms of assembly, forms a cylinder of 14 subunits composed of two heptameric rings stacked back-to-back. Interacts with the co-chaperonin GroES.

The protein resides in the cytoplasm. It carries out the reaction ATP + H2O + a folded polypeptide = ADP + phosphate + an unfolded polypeptide.. In terms of biological role, together with its co-chaperonin GroES, plays an essential role in assisting protein folding. The GroEL-GroES system forms a nano-cage that allows encapsulation of the non-native substrate proteins and provides a physical environment optimized to promote and accelerate protein folding. This is Chaperonin GroEL from Clostridium botulinum (strain ATCC 19397 / Type A).